The chain runs to 372 residues: 4-hydroxy-3-methylbut-2-en-1-yl diphosphate synthase (flavodoxin) (372 aa).

4 residues coordinate [4Fe-4S] cluster: C270, C273, C305, and E312.

This sequence belongs to the IspG family. The cofactor is [4Fe-4S] cluster.

The catalysed reaction is (2E)-4-hydroxy-3-methylbut-2-enyl diphosphate + oxidized [flavodoxin] + H2O + 2 H(+) = 2-C-methyl-D-erythritol 2,4-cyclic diphosphate + reduced [flavodoxin]. It participates in isoprenoid biosynthesis; isopentenyl diphosphate biosynthesis via DXP pathway; isopentenyl diphosphate from 1-deoxy-D-xylulose 5-phosphate: step 5/6. Converts 2C-methyl-D-erythritol 2,4-cyclodiphosphate (ME-2,4cPP) into 1-hydroxy-2-methyl-2-(E)-butenyl 4-diphosphate. The sequence is that of 4-hydroxy-3-methylbut-2-en-1-yl diphosphate synthase (flavodoxin) from Aliivibrio fischeri (strain ATCC 700601 / ES114) (Vibrio fischeri).